We begin with the raw amino-acid sequence, 490 residues long: tRNA-guanine(15) transglycosylase (490 aa).

Asp92 (nucleophile) is an active-site residue. Substrate is bound by residues Asp127 and Ala195. Zn(2+) contacts are provided by Cys278, Cys280, and Cys283.

The protein belongs to the archaeosine tRNA-ribosyltransferase family. Zn(2+) serves as cofactor.

The catalysed reaction is guanosine(15) in tRNA + 7-cyano-7-deazaguanine = 7-cyano-7-carbaguanosine(15) in tRNA + guanine. It functions in the pathway tRNA modification; archaeosine-tRNA biosynthesis. Its function is as follows. Exchanges the guanine residue with 7-cyano-7-deazaguanine (preQ0) at position 15 in the dihydrouridine loop (D-loop) of archaeal tRNAs. This Haloarcula marismortui (strain ATCC 43049 / DSM 3752 / JCM 8966 / VKM B-1809) (Halobacterium marismortui) protein is tRNA-guanine(15) transglycosylase.